A 659-amino-acid chain; its full sequence is Pentatricopeptide repeat-containing protein At3g48810 (659 aa).

PPR repeat units follow at residues 75–109 (TPLTFEVMIRKLAMDGQVDSVQYLLQQMKLQGFHC), 110–144 (SEDLFISVISVYRQVGLAERAVEMFYRIKEFGCDP), 145–179 (SVKIYNHVLDTLLGENRIQMIYMVYRDMKRDGFEP), 180–214 (NVFTYNVLLKALCKNNKVDGAKKLLVEMSNKGCCP), 215–243 (DAVSYTTVISSMCEVGLVKEGRELAERFE), 245–279 (VVSVYNALINGLCKEHDYKGAFELMREMVEKGISP), 280–314 (NVISYSTLINVLCNSGQIELAFSFLTQMLKRGCHP), 315–350 (NIYTLSSLVKGCFLRGTTFDALDLWNQMIRGFGLQP), 351–385 (NVVAYNTLVQGFCSHGNIVKAVSVFSHMEEIGCSP), 386–420 (NIRTYGSLINGFAKRGSLDGAVYIWNKMLTSGCCP), 421–455 (NVVVYTNMVEALCRHSKFKEAESLIEIMSKENCAP), 456–490 (SVPTFNAFIKGLCDAGRLDWAEKVFRQMEQQHRCP), 492–526 (NIVTYNELLDGLAKANRIEEAYGLTREIFMRGVEW), 527–561 (SSSTYNTLLHGSCNAGLPGIALQLVGKMMVDGKSP), 562–598 (DEITMNMIILAYCKQGKAERAAQMLDLVSCGRRKWRP), and 599–633 (DVISYTNVIWGLCRSNCREDGVILLERMISAGIVP).

It belongs to the PPR family. P subfamily.

The sequence is that of Pentatricopeptide repeat-containing protein At3g48810 from Arabidopsis thaliana (Mouse-ear cress).